A 365-amino-acid chain; its full sequence is Mitogen-activated protein kinase p38b (365 aa).

A Protein kinase domain is found at Tyr-24 to Met-311. ATP contacts are provided by residues Val-30–Val-38 and Lys-53. The active-site Proton acceptor is the Asp-153. Thr-183 bears the Phosphothreonine mark. The TXY motif lies at Thr-183–Tyr-185. Tyr-185 bears the Phosphotyrosine mark.

Belongs to the protein kinase superfamily. CMGC Ser/Thr protein kinase family. MAP kinase subfamily. Mg(2+) serves as cofactor. Post-translationally, dually phosphorylated on Thr-183 and Tyr-185, which activates the enzyme. As to expression, at mid-embryogenesis, highest expression is seen in developing anterior and posterior midguts. Almost ubiquitous expression throughout all development.

The protein resides in the nucleus. It carries out the reaction L-seryl-[protein] + ATP = O-phospho-L-seryl-[protein] + ADP + H(+). The catalysed reaction is L-threonyl-[protein] + ATP = O-phospho-L-threonyl-[protein] + ADP + H(+). Its activity is regulated as follows. Activated by threonine and tyrosine phosphorylation by Mkk3. Functionally, kinase involved in dpp signal transduction pathway in the process of wing morphogenesis when the levels of dpp are enhanced or inhibited. May down-regulate insect immunity gene expression after prolonged infection. The polypeptide is Mitogen-activated protein kinase p38b (Drosophila melanogaster (Fruit fly)).